Consider the following 438-residue polypeptide: Adenosylhomocysteinase (438 aa).

The substrate site is built by T61, D137, and E162. 163–165 (TTT) contacts NAD(+). Residues K192 and D196 each contribute to the substrate site. Residues N197, 226 to 231 (GYGDVG), E249, N284, 305 to 307 (IGH), and N352 each bind NAD(+).

It belongs to the adenosylhomocysteinase family. It depends on NAD(+) as a cofactor.

Its subcellular location is the cytoplasm. It carries out the reaction S-adenosyl-L-homocysteine + H2O = L-homocysteine + adenosine. The protein operates within amino-acid biosynthesis; L-homocysteine biosynthesis; L-homocysteine from S-adenosyl-L-homocysteine: step 1/1. Its function is as follows. May play a key role in the regulation of the intracellular concentration of adenosylhomocysteine. In Christiangramia forsetii (strain DSM 17595 / CGMCC 1.15422 / KT0803) (Gramella forsetii), this protein is Adenosylhomocysteinase.